The following is a 269-amino-acid chain: Shikimate dehydrogenase (NADP(+)) (269 aa).

Shikimate-binding positions include 19-21 (SLS) and threonine 66. The active-site Proton acceptor is lysine 70. Position 82 (aspartate 82) interacts with NADP(+). 2 residues coordinate shikimate: asparagine 91 and aspartate 106. NADP(+)-binding positions include 130 to 134 (GAGGA), 153 to 158 (NRTKEK), and isoleucine 214. Tyrosine 216 lines the shikimate pocket. Glycine 235 contacts NADP(+). Glutamine 242 lines the shikimate pocket.

Belongs to the shikimate dehydrogenase family. In terms of assembly, homodimer.

It catalyses the reaction shikimate + NADP(+) = 3-dehydroshikimate + NADPH + H(+). The protein operates within metabolic intermediate biosynthesis; chorismate biosynthesis; chorismate from D-erythrose 4-phosphate and phosphoenolpyruvate: step 4/7. Its function is as follows. Involved in the biosynthesis of the chorismate, which leads to the biosynthesis of aromatic amino acids. Catalyzes the reversible NADPH linked reduction of 3-dehydroshikimate (DHSA) to yield shikimate (SA). This Aquifex aeolicus (strain VF5) protein is Shikimate dehydrogenase (NADP(+)).